A 346-amino-acid polypeptide reads, in one-letter code: Biotin synthase (346 aa).

One can recognise a Radical SAM core domain in the interval 38-256 (RQVQVSTLLS…IAVARIMMPT (219 aa)). The [4Fe-4S] cluster site is built by Cys53, Cys57, and Cys60. [2Fe-2S] cluster-binding residues include Cys97, Cys128, Cys188, and Arg260.

Belongs to the radical SAM superfamily. Biotin synthase family. In terms of assembly, homodimer. The cofactor is [4Fe-4S] cluster. [2Fe-2S] cluster serves as cofactor.

The catalysed reaction is (4R,5S)-dethiobiotin + (sulfur carrier)-SH + 2 reduced [2Fe-2S]-[ferredoxin] + 2 S-adenosyl-L-methionine = (sulfur carrier)-H + biotin + 2 5'-deoxyadenosine + 2 L-methionine + 2 oxidized [2Fe-2S]-[ferredoxin]. The protein operates within cofactor biosynthesis; biotin biosynthesis; biotin from 7,8-diaminononanoate: step 2/2. Functionally, catalyzes the conversion of dethiobiotin (DTB) to biotin by the insertion of a sulfur atom into dethiobiotin via a radical-based mechanism. The polypeptide is Biotin synthase (Escherichia coli (strain K12 / DH10B)).